The sequence spans 404 residues: MTDLRSATGPYFGDFGGRYVPESLVAALDELAEAWEELKVDPAFIEELKELHRSYTGRPSLITEVPRFAEHAGGARIILKREDLNHTGSHKINNVLGQALLTKKIGKKRIIAETGAGQHGVATATAAALFGLDCVIYMGEVDTERQALNVARMRLLGAEVIPVRSGSRTLKDAINDAMRDWVTNVETTNYVFGTVAGPHPFPAMVRDLQKVIGEEAREQVLALTGRLPDAVAACVGGGSNAIGIFHAFLDDADVALYGFEAGGDGADTPRTAATITKGRPGMLHGARSYLLQDEDGQTIDSHSISAGLDYPGVGPEHSWLSDLGRASYRPVTDDQAMSALRLLSRTEGIIPAIESAHALAGALELGKELGPDSIILINLSGRGDKDMETAGKYFDLIDAGAEQS.

N6-(pyridoxal phosphate)lysine is present on lysine 91.

Belongs to the TrpB family. In terms of assembly, tetramer of two alpha and two beta chains. It depends on pyridoxal 5'-phosphate as a cofactor.

The enzyme catalyses (1S,2R)-1-C-(indol-3-yl)glycerol 3-phosphate + L-serine = D-glyceraldehyde 3-phosphate + L-tryptophan + H2O. It participates in amino-acid biosynthesis; L-tryptophan biosynthesis; L-tryptophan from chorismate: step 5/5. Its function is as follows. The beta subunit is responsible for the synthesis of L-tryptophan from indole and L-serine. This is Tryptophan synthase beta chain from Clavibacter michiganensis subsp. michiganensis (strain NCPPB 382).